Reading from the N-terminus, the 63-residue chain is Large ribosomal subunit protein uL30 (63 aa).

The protein belongs to the universal ribosomal protein uL30 family. In terms of assembly, part of the 50S ribosomal subunit.

This Rickettsia typhi (strain ATCC VR-144 / Wilmington) protein is Large ribosomal subunit protein uL30.